The primary structure comprises 455 residues: Histone chaperone RTT106 (455 aa).

Serine 2 is modified (N-acetylserine). The interval serine 2 to isoleucine 67 is dimeric region. PH domains are found at residues serine 68–isoleucine 200 and isoleucine 217–lysine 301. Residues serine 68–lysine 301 form a double PH domain region. A compositionally biased stretch (basic and acidic residues) spans aspartate 305–alanine 314. The segment at aspartate 305 to aspartate 455 is disordered. Polar residues predominate over residues lysine 319–glutamine 339. 2 stretches are compositionally biased toward acidic residues: residues serine 350–leucine 366 and aspartate 376–glutamate 395. Over residues alanine 402–glutamine 418 the composition is skewed to polar residues. Phosphoserine is present on residues serine 408 and serine 411. Residues leucine 420–leucine 429 show a composition bias toward basic and acidic residues. The span at glutamate 430–aspartate 455 shows a compositional bias: acidic residues. Serine 450 carries the phosphoserine modification.

The protein belongs to the RTT106 family. Homodimers (via the N-terminal domain). Interacts with the SWI/SNF complex. Interacts with the RSC complex. Interacts with the HIR complex. Interacts with the CAF-1 complex. Interacts with RLF2. Interacts with SIR4. Interacts with YTA7. Interacts with CAC2. Interacts with HPC2. Interacts with HIR2. Interacts with MSI1. Interacts with HIR1. Interacts with histone H3. Interacts with histone H4.

The protein resides in the nucleus. Its subcellular location is the chromosome. Its function is as follows. Histones H3 and H4 chaperone involved in the nucleosome formation and heterochromatin silencing. Required for the deposition of H3K56ac-carrying H3-H4 complex onto newly-replicated DNA. Plays a role in the transcriptional regulation of the cell-cycle dependent histone genes by directly recruiting the SWI/SNF and RSC chromatin remodeling complexes to the histone genes in a cell cycle dependent manner. In cooperation with HIR and ASF1, creates a repressive structure at the core histone gene promoter and contributes to their repression outside of S phase. Involved in regulation of Ty1 transposition. The polypeptide is Histone chaperone RTT106 (Saccharomyces cerevisiae (strain ATCC 204508 / S288c) (Baker's yeast)).